A 327-amino-acid polypeptide reads, in one-letter code: MASTTPNLTAPAVKLNSGYAMPIVGFGLWKVNKETCADQVYNAIRTGYRLFDGACDYGNEVEAGKGVARAIKEGIVRREDLFIVSKLWGTFHDPEHVEPACRRQLSHWGIDYFDLFIVHFPISLKYVDPEVRYPPEWSAPGEKAESGNVPLYKTWGAMEELVDKRLARSIGISNFSPQLIMDLLRYARIRPSTLQIEHHPYLTQEGLIKYAQDEGLVVTAYSSLGPQSFIELENKAATGTTLLLEHPTIKSSAEKHGKTPAQILLRWATQRGIAVIPKSNNPDRLAQNLDATGFNLTANELRAISALDQGLRFNNPPSYGVNFPIFG.

Catalysis depends on tyrosine 57, which acts as the Proton donor. Histidine 119 lines the substrate pocket. Residues 173–174 (SN), 222–231 (SSLGPQSFIE), and 278–288 (KSNNPDRLAQN) contribute to the NAD(+) site.

This sequence belongs to the aldo/keto reductase family.

It catalyses the reaction xylitol + NAD(+) = D-xylose + NADH + H(+). The catalysed reaction is xylitol + NADP(+) = D-xylose + NADPH + H(+). The protein operates within carbohydrate metabolism; D-xylose degradation. Its function is as follows. Catalyzes the initial reaction in the xylose utilization pathway by reducing D-xylose into xylitol. Xylose is a major component of hemicelluloses such as xylan. Most fungi utilize D-xylose via three enzymatic reactions, xylose reductase (XR), xylitol dehydrogenase (XDH), and xylulokinase, to form xylulose 5-phosphate, which enters pentose phosphate pathway. The sequence is that of Probable NAD(P)H-dependent D-xylose reductase xyl1 (xyl1) from Arthroderma otae (strain ATCC MYA-4605 / CBS 113480) (Microsporum canis).